A 594-amino-acid chain; its full sequence is A-type ATP synthase subunit A (594 aa).

236–243 (GPFGSGKT) contacts ATP.

Belongs to the ATPase alpha/beta chains family. Has multiple subunits with at least A(3), B(3), C, D, E, F, H, I and proteolipid K(x).

The protein resides in the cell membrane. The catalysed reaction is ATP + H2O + 4 H(+)(in) = ADP + phosphate + 5 H(+)(out). Its function is as follows. Component of the A-type ATP synthase that produces ATP from ADP in the presence of a proton gradient across the membrane. The A chain is the catalytic subunit. This Pyrobaculum calidifontis (strain DSM 21063 / JCM 11548 / VA1) protein is A-type ATP synthase subunit A.